A 433-amino-acid chain; its full sequence is Probable mannose-6-phosphate isomerase (433 aa).

Residues Q103, H105, E130, and H277 each contribute to the Zn(2+) site. R296 is an active-site residue.

The protein belongs to the mannose-6-phosphate isomerase type 1 family. The cofactor is Zn(2+).

The protein resides in the cytoplasm. The catalysed reaction is D-mannose 6-phosphate = D-fructose 6-phosphate. The protein operates within nucleotide-sugar biosynthesis; GDP-alpha-D-mannose biosynthesis; alpha-D-mannose 1-phosphate from D-fructose 6-phosphate: step 1/2. In terms of biological role, involved in the synthesis of the GDP-mannose and dolichol-phosphate-mannose required for a number of critical mannosyl transfer reactions. The sequence is that of Probable mannose-6-phosphate isomerase (PMIH) from Echinococcus multilocularis (Fox tapeworm).